Reading from the N-terminus, the 299-residue chain is Hemolysin C homolog (299 aa).

2 CBS domains span residues 80–142 (MVPR…NGRL) and 145–202 (LIRK…IDDE).

The protein belongs to the UPF0053 family. Hemolysin C subfamily.

This is Hemolysin C homolog (tlyC) from Rickettsia rickettsii (strain Sheila Smith).